The chain runs to 459 residues: Glutathione reductase (459 aa).

FAD contacts are provided by S14, G15, E34, T41, C42, K50, and A114. A glutathione-binding site is contributed by S14. A disulfide bridge connects residues C42 and C47. 5 residues coordinate NADP(+): I177, E180, R197, K203, and G262. 2 residues coordinate FAD: D313 and T321. R329 is a glutathione binding site. Position 351 (A351) interacts with NADP(+). FAD is bound at residue H448. The Proton acceptor role is filled by H448.

Belongs to the class-I pyridine nucleotide-disulfide oxidoreductase family. In terms of assembly, homodimer. The cofactor is FAD.

It localises to the cytoplasm. The enzyme catalyses 2 glutathione + NADP(+) = glutathione disulfide + NADPH + H(+). Functionally, catalyzes the reduction of glutathione disulfide (GSSG) to reduced glutathione (GSH). Constitutes the major mechanism to maintain a high GSH:GSSG ratio in the cytosol. The chain is Glutathione reductase (gor) from Nostoc sp. (strain PCC 7120 / SAG 25.82 / UTEX 2576).